The following is a 422-amino-acid chain: UDP-N-acetylglucosamine 1-carboxyvinyltransferase (422 aa).

A phosphoenolpyruvate-binding site is contributed by 22–23 (KN). Arginine 95 contributes to the UDP-N-acetyl-alpha-D-glucosamine binding site. The Proton donor role is filled by cysteine 119. At cysteine 119 the chain carries 2-(S-cysteinyl)pyruvic acid O-phosphothioketal. Residues 124 to 128 (RPIDQ), aspartate 309, and valine 331 contribute to the UDP-N-acetyl-alpha-D-glucosamine site.

This sequence belongs to the EPSP synthase family. MurA subfamily.

The protein localises to the cytoplasm. It catalyses the reaction phosphoenolpyruvate + UDP-N-acetyl-alpha-D-glucosamine = UDP-N-acetyl-3-O-(1-carboxyvinyl)-alpha-D-glucosamine + phosphate. It functions in the pathway cell wall biogenesis; peptidoglycan biosynthesis. Its function is as follows. Cell wall formation. Adds enolpyruvyl to UDP-N-acetylglucosamine. In Anaeromyxobacter sp. (strain K), this protein is UDP-N-acetylglucosamine 1-carboxyvinyltransferase.